We begin with the raw amino-acid sequence, 175 residues long: Large ribosomal subunit protein uL10 (175 aa).

Belongs to the universal ribosomal protein uL10 family. As to quaternary structure, part of the ribosomal stalk of the 50S ribosomal subunit. The N-terminus interacts with L11 and the large rRNA to form the base of the stalk. The C-terminus forms an elongated spine to which L12 dimers bind in a sequential fashion forming a multimeric L10(L12)X complex.

Its function is as follows. Forms part of the ribosomal stalk, playing a central role in the interaction of the ribosome with GTP-bound translation factors. This is Large ribosomal subunit protein uL10 from Cyanothece sp. (strain PCC 7425 / ATCC 29141).